Reading from the N-terminus, the 128-residue chain is Histone H2A type 1-H (128 aa).

The disordered stretch occupies residues 1-22; sequence MSGRGKQGGKARAKAKTRSSRA. N-acetylserine is present on Ser2. At Ser2 the chain carries Phosphoserine; by RPS6KA5. Arg4 is subject to Citrulline; alternate. At Arg4 the chain carries Symmetric dimethylarginine; by PRMT5; alternate. Residues Lys6 and Lys10 each carry the N6-(2-hydroxyisobutyryl)lysine; alternate modification. An N6-(beta-hydroxybutyryl)lysine; alternate modification is found at Lys6. Basic residues predominate over residues 7–19; it reads QGGKARAKAKTRS. N6-lactoyllysine; alternate is present on Lys10. Lys10 bears the N6-succinyllysine; alternate mark. Residues Lys14 and Lys16 each participate in a glycyl lysine isopeptide (Lys-Gly) (interchain with G-Cter in ubiquitin) cross-link. Position 37 is an N6-(2-hydroxyisobutyryl)lysine; alternate (Lys37). Lys37 carries the N6-(beta-hydroxybutyryl)lysine; alternate modification. Lys37 bears the N6-crotonyllysine; alternate mark. An N6-(2-hydroxyisobutyryl)lysine mark is found at Lys75 and Lys76. An N6-(2-hydroxyisobutyryl)lysine; alternate modification is found at Lys96. An N6-succinyllysine; alternate modification is found at Lys96. Lys96 bears the N6-glutaryllysine; alternate mark. An N5-methylglutamine modification is found at Gln105. The residue at position 119 (Lys119) is an N6-(2-hydroxyisobutyryl)lysine; alternate. An N6-crotonyllysine; alternate mark is found at Lys119 and Lys120. Lys119 and Lys120 each carry N6-glutaryllysine; alternate. Lys120 bears the N6-(beta-hydroxybutyryl)lysine; alternate mark. Lys120 is covalently cross-linked (Glycyl lysine isopeptide (Lys-Gly) (interchain with G-Cter in ubiquitin); alternate). Thr121 bears the Phosphothreonine; by DCAF1 mark. Lys126 carries the post-translational modification N6-(beta-hydroxybutyryl)lysine; alternate. At Lys126 the chain carries N6-crotonyllysine; alternate. N6-glutaryllysine; alternate is present on Lys126.

It belongs to the histone H2A family. As to quaternary structure, the nucleosome is a histone octamer containing two molecules each of H2A, H2B, H3 and H4 assembled in one H3-H4 heterotetramer and two H2A-H2B heterodimers. The octamer wraps approximately 147 bp of DNA. Deiminated on Arg-4 in granulocytes upon calcium entry. Post-translationally, monoubiquitination of Lys-120 (H2AK119Ub) by RING1, TRIM37 and RNF2/RING2 complex gives a specific tag for epigenetic transcriptional repression and participates in X chromosome inactivation of female mammals. It is involved in the initiation of both imprinted and random X inactivation. Ubiquitinated H2A is enriched in inactive X chromosome chromatin. Ubiquitination of H2A functions downstream of methylation of 'Lys-27' of histone H3 (H3K27me). H2AK119Ub by RNF2/RING2 can also be induced by ultraviolet and may be involved in DNA repair. Following DNA double-strand breaks (DSBs), it is ubiquitinated through 'Lys-63' linkage of ubiquitin moieties by the E2 ligase UBE2N and the E3 ligases RNF8 and RNF168, leading to the recruitment of repair proteins to sites of DNA damage. Ubiquitination at Lys-14 and Lys-16 (H2AK13Ub and H2AK15Ub, respectively) in response to DNA damage is initiated by RNF168 that mediates monoubiquitination at these 2 sites, and 'Lys-63'-linked ubiquitin are then conjugated to monoubiquitin; RNF8 is able to extend 'Lys-63'-linked ubiquitin chains in vitro. H2AK119Ub and ionizing radiation-induced 'Lys-63'-linked ubiquitination (H2AK13Ub and H2AK15Ub) are distinct events. In terms of processing, phosphorylation on Ser-2 (H2AS1ph) is enhanced during mitosis. Phosphorylation on Ser-2 by RPS6KA5/MSK1 directly represses transcription. Acetylation of H3 inhibits Ser-2 phosphorylation by RPS6KA5/MSK1. Phosphorylation at Thr-121 (H2AT120ph) by DCAF1 is present in the regulatory region of many tumor suppresor genes and down-regulates their transcription. Symmetric dimethylation on Arg-4 by the PRDM1/PRMT5 complex may play a crucial role in the germ-cell lineage. Post-translationally, glutamine methylation at Gln-105 (H2AQ104me) by FBL is specifically dedicated to polymerase I. It is present at 35S ribosomal DNA locus and impairs binding of the FACT complex. In terms of processing, crotonylation (Kcr) is specifically present in male germ cells and marks testis-specific genes in post-meiotic cells, including X-linked genes that escape sex chromosome inactivation in haploid cells. Crotonylation marks active promoters and enhancers and confers resistance to transcriptional repressors. It is also associated with post-meiotically activated genes on autosomes. Hydroxybutyrylation of histones is induced by starvation. Post-translationally, lactylated in macrophages by EP300/P300 by using lactoyl-CoA directly derived from endogenous or exogenous lactate, leading to stimulates gene transcription.

Its subcellular location is the nucleus. It is found in the chromosome. In terms of biological role, core component of nucleosome. Nucleosomes wrap and compact DNA into chromatin, limiting DNA accessibility to the cellular machineries which require DNA as a template. Histones thereby play a central role in transcription regulation, DNA repair, DNA replication and chromosomal stability. DNA accessibility is regulated via a complex set of post-translational modifications of histones, also called histone code, and nucleosome remodeling. This Mus musculus (Mouse) protein is Histone H2A type 1-H.